A 573-amino-acid chain; its full sequence is Potassium-transporting ATPase potassium-binding subunit (573 aa).

10 helical membrane passes run 6-26 (ILFA…GSYI), 66-86 (FFSL…ILLL), 135-155 (ALAV…IALI), 177-197 (VFWI…FQGV), 257-277 (IQMV…GKWV), 283-303 (GWLI…VMTI), 382-402 (IFGG…LAVF), 428-448 (MFAL…AAVI), 493-513 (ITIA…VIML), and 537-557 (FIFA…TIFP).

The protein belongs to the KdpA family. In terms of assembly, the system is composed of three essential subunits: KdpA, KdpB and KdpC.

It is found in the cell inner membrane. Functionally, part of the high-affinity ATP-driven potassium transport (or Kdp) system, which catalyzes the hydrolysis of ATP coupled with the electrogenic transport of potassium into the cytoplasm. This subunit binds the periplasmic potassium ions and delivers the ions to the membrane domain of KdpB through an intramembrane tunnel. The sequence is that of Potassium-transporting ATPase potassium-binding subunit from Francisella tularensis subsp. mediasiatica (strain FSC147).